The following is a 230-amino-acid chain: Orotate phosphoribosyltransferase (230 aa).

5-phospho-alpha-D-ribose 1-diphosphate is bound by residues R107, K108, K111, H113, and 133 to 141 (EDLTTAGGS). T137 is an orotate binding site.

This sequence belongs to the purine/pyrimidine phosphoribosyltransferase family. PyrE subfamily. As to quaternary structure, homodimer. Mg(2+) is required as a cofactor.

It catalyses the reaction orotidine 5'-phosphate + diphosphate = orotate + 5-phospho-alpha-D-ribose 1-diphosphate. Its pathway is pyrimidine metabolism; UMP biosynthesis via de novo pathway; UMP from orotate: step 1/2. Catalyzes the transfer of a ribosyl phosphate group from 5-phosphoribose 1-diphosphate to orotate, leading to the formation of orotidine monophosphate (OMP). This is Orotate phosphoribosyltransferase from Allorhizobium ampelinum (strain ATCC BAA-846 / DSM 112012 / S4) (Agrobacterium vitis (strain S4)).